The chain runs to 69 residues: Large ribosomal subunit protein uL29 (69 aa).

The protein belongs to the universal ribosomal protein uL29 family.

The chain is Large ribosomal subunit protein uL29 from Sulfolobus acidocaldarius (strain ATCC 33909 / DSM 639 / JCM 8929 / NBRC 15157 / NCIMB 11770).